The chain runs to 272 residues: Undecaprenyl-diphosphatase (272 aa).

A run of 7 helical transmembrane segments spans residues 2 to 22 (FDII…FLPI), 43 to 63 (FISM…VLLY), 82 to 102 (WQLW…GLPL), 110 to 130 (LHTP…FIIL), 185 to 205 (YVAT…VLII), 224 to 244 (VLMT…KWLL), and 252 to 272 (FKPF…VMFI).

Belongs to the UppP family.

It is found in the cell membrane. The catalysed reaction is di-trans,octa-cis-undecaprenyl diphosphate + H2O = di-trans,octa-cis-undecaprenyl phosphate + phosphate + H(+). Its function is as follows. Catalyzes the dephosphorylation of undecaprenyl diphosphate (UPP). Confers resistance to bacitracin. This chain is Undecaprenyl-diphosphatase, found in Lacticaseibacillus casei (strain BL23) (Lactobacillus casei).